Here is a 275-residue protein sequence, read N- to C-terminus: Transmembrane protein 45B (275 aa).

7 consecutive transmembrane segments (helical) span residues 7 to 27 (HALP…KYPL), 47 to 67 (IVEA…EQFV), 94 to 114 (LFFA…HVPL), 116 to 136 (VDRL…YYHV), 146 to 166 (IHSL…LEVI), 180 to 200 (LIIL…PPFG), and 212 to 232 (LMFI…IVAV). 2 positions are modified to phosphoserine: Ser270 and Ser272.

It belongs to the TMEM45 family. In terms of assembly, (Microbial infection) Interacts with sindbis virus nsP1 and nsP4; these interactions lead to viral RNA replication inhibition. As to quaternary structure, (Microbial infection) Interacts with chikungunya virus nsP1 and nsP4; these interactions lead to viral RNA replication inhibition.

It localises to the endosome membrane. The protein localises to the lysosome membrane. It is found in the golgi apparatus. Its subcellular location is the trans-Golgi network membrane. Functionally, plays a role in innate immunity. Mechanistically, promotes alphaviruses RNA degradation by interacting with the viral polymerase nsP4 and the mRNA-capping enzyme nsP1 and thereby interfering with the interaction between viral RNA and nsP1. This is Transmembrane protein 45B (TMEM45B) from Homo sapiens (Human).